Here is a 170-residue protein sequence, read N- to C-terminus: Ankyrin repeat-containing protein C105.02c (170 aa).

ANK repeat units lie at residues 46 to 76 (LGNDCVHVCTKYGSLECLDWLLDISGVNLNN) and 81 to 116 (TGDTPLHFAVMFIKKDQETALRMVEMLMEVGADPLL). A disordered region spans residues 150-170 (SADVVADDDDEEEGSGESDEE). Acidic residues predominate over residues 154 to 170 (VADDDDEEEGSGESDEE).

Its subcellular location is the cytoplasm. The protein resides in the nucleus. The sequence is that of Ankyrin repeat-containing protein C105.02c from Schizosaccharomyces pombe (strain 972 / ATCC 24843) (Fission yeast).